Reading from the N-terminus, the 524-residue chain is Probable inorganic phosphate transporter 1-2 (524 aa).

Topologically, residues 1 to 24 (MAEQQLGVLKALDVAKTQLYHFTA) are cytoplasmic. A helical transmembrane segment spans residues 25 to 45 (IVIAGMGFFTDAYDLFCVSLV). The Extracellular segment spans residues 46 to 70 (TKLLGRIYYFNPESAKPGSLPPHVA). Residues 71-91 (AAVNGVALCGTLSGQLFFGWL) traverse the membrane as a helical segment. Over 92 to 99 (GDKLGRKK) the chain is Cytoplasmic. The helical transmembrane segment at 100 to 120 (VYGLTLIMMILCSVASGLSFG) threads the bilayer. Residues 121 to 131 (NEAKGVMTTLC) are Extracellular-facing. Residues 132–152 (FFRFWLGFGIGGDYPLSATIM) form a helical membrane-spanning segment. Over 153–161 (SEYANKKTR) the chain is Cytoplasmic. Residues 162–182 (GAFIAAVFAMQGVGILAGGFV) traverse the membrane as a helical segment. Residues 183-211 (ALAVSSIFDKKFPAPTYAVNRALSTPPQV) lie on the Extracellular side of the membrane. Residues 212 to 232 (DYIWRIIVMFGALPAALTYYW) form a helical membrane-spanning segment. Over 233-292 (RMKMPETARYTALVAKNIKQATADMSKVLQTDIELEERVEDDVKDPRQNYGLFSKEFLRR) the chain is Cytoplasmic. Residues 293–313 (HGLHLLGTTSTWFLLDIAFYS) form a helical membrane-spanning segment. The Extracellular segment spans residues 314–348 (QNLFQKDIFSAIGWIPKAATMNATHEVFRIARAQT). The chain crosses the membrane as a helical span at residues 349-369 (LIALCSTVPGYWFTVAFIDTI). Residues 370–371 (GR) are Cytoplasmic-facing. The helical transmembrane segment at 372–392 (FKIQLNGFFMMTVFMFAIAFP) threads the bilayer. Topologically, residues 393–402 (YNHWIKPENR) are extracellular. A helical transmembrane segment spans residues 403-423 (IGFVVMYSLTFFFANFGPNAT). The Cytoplasmic segment spans residues 424–441 (TFIVPAEIFPARLRSTCH). Residues 442-462 (GISAAAGKAGAIIGAFGFLYA) traverse the membrane as a helical segment. At 463-484 (AQNQDKAKVDAGYPPGIGVKNS) the chain is on the extracellular side. The chain crosses the membrane as a helical span at residues 485–505 (LIVLGVLNFIGMLFTFLVPEP). Residues 506–524 (KGKSLEELSGEAEVSHDEK) are Cytoplasmic-facing.

Belongs to the major facilitator superfamily. Phosphate:H(+) symporter (TC 2.A.1.9) family. As to expression, root specific, especially in trichoblasts. In mature plants, localized in root cortical cells and young lateral roots.

It is found in the membrane. Functionally, high-affinity transporter for external inorganic phosphate. The sequence is that of Probable inorganic phosphate transporter 1-2 (PHT1-2) from Arabidopsis thaliana (Mouse-ear cress).